The primary structure comprises 209 residues: Ribosomal RNA large subunit methyltransferase E (209 aa).

S-adenosyl-L-methionine contacts are provided by glycine 63, tryptophan 65, aspartate 83, aspartate 99, and aspartate 124. Lysine 164 functions as the Proton acceptor in the catalytic mechanism.

This sequence belongs to the class I-like SAM-binding methyltransferase superfamily. RNA methyltransferase RlmE family.

It is found in the cytoplasm. It catalyses the reaction uridine(2552) in 23S rRNA + S-adenosyl-L-methionine = 2'-O-methyluridine(2552) in 23S rRNA + S-adenosyl-L-homocysteine + H(+). Its function is as follows. Specifically methylates the uridine in position 2552 of 23S rRNA at the 2'-O position of the ribose in the fully assembled 50S ribosomal subunit. The sequence is that of Ribosomal RNA large subunit methyltransferase E from Shewanella amazonensis (strain ATCC BAA-1098 / SB2B).